We begin with the raw amino-acid sequence, 299 residues long: Hairy/enhancer-of-split related with YRPW motif protein 1 (299 aa).

The tract at residues 1 to 53 (MKRAHPDYSSSDSELDETIEVEKESADENGNLSSALCSMSPTTSSQVLARKRR) is disordered. The span at 28–47 (ENGNLSSALCSMSPTTSSQV) shows a compositional bias: polar residues. Residues 48 to 117 (LARKRRRGII…GGKGYFDAHA (70 aa)) form a transcriptional repression and interaction with NCOR1 and SIN3A region. The region spanning 49–104 (ARKRRRGIIEKRRRDRINNSLSELRRLVPSAFEKQGSAKLEKAEILQMTVDHLKML) is the bHLH domain. The Orange domain occupies 122–158 (YRSLGFRECLAEVARYLSIIEGLDASDPLLVRLVSHL). Residues 194 to 234 (LLLPQNGHGNAGTAASPTEPHHQGRLASAHPEAPALRAPPS) form a disordered region. Residues 289–292 (YRPW) carry the YRPW motif motif.

Belongs to the HEY family. As to quaternary structure, may self-associate. Interacts with HES1, NCOR1 and SIN3A. Interacts with GATA4, GATA6 and HDAC1 and HEYL. Interacts with CCDC89/BOIP. As to expression, expressed in somitic mesoderm, brain, central nervous system, kidney, heart, nasal epithelium, limbs, lung, muscle, ovary and testis.

It is found in the nucleus. Functionally, transcriptional repressor which binds preferentially to the canonical E box sequence 5'-CACGTG-3'. Downstream effector of Notch signaling required for cardiovascular development. Specifically required for the Notch-induced endocardial epithelial to mesenchymal transition, which is itself criticial for cardiac valve and septum development. May be required in conjunction with HEY2 to specify arterial cell fate or identity. Promotes maintenance of neuronal precursor cells and glial versus neuronal fate specification. Represses transcription by the cardiac transcriptional activators GATA4 and GATA6 and by the neuronal bHLH factors ASCL1/MASH1 and NEUROD4/MATH3. In Mus musculus (Mouse), this protein is Hairy/enhancer-of-split related with YRPW motif protein 1 (Hey1).